Consider the following 361-residue polypeptide: Peptide chain release factor 1 (361 aa).

The residue at position 235 (glutamine 235) is an N5-methylglutamine.

It belongs to the prokaryotic/mitochondrial release factor family. Methylated by PrmC. Methylation increases the termination efficiency of RF1.

The protein localises to the cytoplasm. Its function is as follows. Peptide chain release factor 1 directs the termination of translation in response to the peptide chain termination codons UAG and UAA. In Buchnera aphidicola subsp. Acyrthosiphon pisum (strain 5A), this protein is Peptide chain release factor 1.